The primary structure comprises 241 residues: Ribonuclease PH (241 aa).

Phosphate is bound by residues Arg-89 and 127 to 129 (GTR).

This sequence belongs to the RNase PH family. As to quaternary structure, homohexameric ring arranged as a trimer of dimers.

It carries out the reaction tRNA(n+1) + phosphate = tRNA(n) + a ribonucleoside 5'-diphosphate. Functionally, phosphorolytic 3'-5' exoribonuclease that plays an important role in tRNA 3'-end maturation. Removes nucleotide residues following the 3'-CCA terminus of tRNAs; can also add nucleotides to the ends of RNA molecules by using nucleoside diphosphates as substrates, but this may not be physiologically important. Probably plays a role in initiation of 16S rRNA degradation (leading to ribosome degradation) during starvation. The polypeptide is Ribonuclease PH (Xanthomonas oryzae pv. oryzae (strain MAFF 311018)).